Here is a 59-residue protein sequence, read N- to C-terminus: uncharacterized protein (59 aa).

Positions S27–F59 are disordered. Positions S48–F59 are enriched in polar residues.

This is an uncharacterized protein from Homo sapiens (Human).